A 205-amino-acid chain; its full sequence is Pyridoxal 5'-phosphate synthase subunit PdxT (205 aa).

53 to 55 (GES) lines the L-glutamine pocket. Cysteine 85 functions as the Nucleophile in the catalytic mechanism. Residues arginine 112 and 140–141 (IR) contribute to the L-glutamine site. Residues histidine 176 and glutamate 178 each act as charge relay system in the active site.

This sequence belongs to the glutaminase PdxT/SNO family. As to quaternary structure, in the presence of PdxS, forms a dodecamer of heterodimers. Only shows activity in the heterodimer.

The enzyme catalyses aldehydo-D-ribose 5-phosphate + D-glyceraldehyde 3-phosphate + L-glutamine = pyridoxal 5'-phosphate + L-glutamate + phosphate + 3 H2O + H(+). It catalyses the reaction L-glutamine + H2O = L-glutamate + NH4(+). It functions in the pathway cofactor biosynthesis; pyridoxal 5'-phosphate biosynthesis. In terms of biological role, catalyzes the hydrolysis of glutamine to glutamate and ammonia as part of the biosynthesis of pyridoxal 5'-phosphate. The resulting ammonia molecule is channeled to the active site of PdxS. This chain is Pyridoxal 5'-phosphate synthase subunit PdxT, found in Haloquadratum walsbyi (strain DSM 16790 / HBSQ001).